The chain runs to 433 residues: Gamma-glutamyl phosphate reductase (433 aa).

This sequence belongs to the gamma-glutamyl phosphate reductase family.

The protein resides in the cytoplasm. It catalyses the reaction L-glutamate 5-semialdehyde + phosphate + NADP(+) = L-glutamyl 5-phosphate + NADPH + H(+). It functions in the pathway amino-acid biosynthesis; L-proline biosynthesis; L-glutamate 5-semialdehyde from L-glutamate: step 2/2. Its function is as follows. Catalyzes the NADPH-dependent reduction of L-glutamate 5-phosphate into L-glutamate 5-semialdehyde and phosphate. The product spontaneously undergoes cyclization to form 1-pyrroline-5-carboxylate. This Cyanothece sp. (strain PCC 7425 / ATCC 29141) protein is Gamma-glutamyl phosphate reductase.